Here is a 394-residue protein sequence, read N- to C-terminus: Elongation factor Tu 2 (394 aa).

The tr-type G domain maps to 10 to 204 (KPHVNVGTIG…FLDSYIPEPE (195 aa)). Residues 19–26 (GHVDHGKT) form a G1 region. 19 to 26 (GHVDHGKT) is a GTP binding site. A Mg(2+)-binding site is contributed by Thr-26. The segment at 60 to 64 (GITIN) is G2. The interval 81 to 84 (DCPG) is G3. Residues 81–85 (DCPGH) and 136–139 (NKCD) contribute to the GTP site. The G4 stretch occupies residues 136 to 139 (NKCD). A G5 region spans residues 174 to 176 (SAL).

Belongs to the TRAFAC class translation factor GTPase superfamily. Classic translation factor GTPase family. EF-Tu/EF-1A subfamily. As to quaternary structure, monomer.

The protein localises to the cytoplasm. The catalysed reaction is GTP + H2O = GDP + phosphate + H(+). GTP hydrolase that promotes the GTP-dependent binding of aminoacyl-tRNA to the A-site of ribosomes during protein biosynthesis. The protein is Elongation factor Tu 2 of Escherichia coli O139:H28 (strain E24377A / ETEC).